The chain runs to 278 residues: Potassium/proton antiporter CemA (278 aa).

4 helical membrane passes run 61-81 (IFLLLISPVLVNQASKFFDFG), 155-175 (AVKNILSDILSIAVFILLMIT), 203-223 (IILFTDMFVGFHSPHGWEVII), and 238-258 (FIFLFISTFPVILDTIFKYWI).

Belongs to the CemA family.

It localises to the plastid. Its subcellular location is the chloroplast inner membrane. The enzyme catalyses K(+)(in) + H(+)(out) = K(+)(out) + H(+)(in). In terms of biological role, contributes to K(+)/H(+) antiport activity by supporting proton efflux to control proton extrusion and homeostasis in chloroplasts in a light-dependent manner to modulate photosynthesis. Prevents excessive induction of non-photochemical quenching (NPQ) under continuous-light conditions. Indirectly promotes efficient inorganic carbon uptake into chloroplasts. In Porphyra purpurea (Red seaweed), this protein is Potassium/proton antiporter CemA.